Here is a 153-residue protein sequence, read N- to C-terminus: MENNLQVNIFCIQKSDEFKTWSEKYSKLISKYATLKEINVFNKKIALAQNLNAIEAKKSYEEAFMPYKKGYCIALDEKGKDLTSIEFAKLIQDKNELSFFIGGAYGLREEFNQSLDFRLSLSKLTLAHQFVKTLLLEQIYRAFCINNNHPYHK.

S-adenosyl-L-methionine is bound by residues Leu-75, Gly-102, and 121-126 (LSKLTL).

This sequence belongs to the RNA methyltransferase RlmH family. Homodimer.

It localises to the cytoplasm. It carries out the reaction pseudouridine(1915) in 23S rRNA + S-adenosyl-L-methionine = N(3)-methylpseudouridine(1915) in 23S rRNA + S-adenosyl-L-homocysteine + H(+). In terms of biological role, specifically methylates the pseudouridine at position 1915 (m3Psi1915) in 23S rRNA. This Campylobacter jejuni (strain RM1221) protein is Ribosomal RNA large subunit methyltransferase H.